The following is a 359-amino-acid chain: ATPase ASNA1 homolog (359 aa).

23-30 (KGGVGKTT) serves as a coordination point for ATP. Residue Asp-63 is part of the active site. 2 residues coordinate ATP: Glu-252 and Asn-279. Cys-291 and Cys-294 together coordinate Zn(2+).

This sequence belongs to the arsA ATPase family. Homodimer.

The protein resides in the cytoplasm. Its subcellular location is the endoplasmic reticulum. Functionally, ATPase required for the post-translational delivery of tail-anchored (TA) proteins to the endoplasmic reticulum. Recognizes and selectively binds the transmembrane domain of TA proteins in the cytosol. This complex then targets to the endoplasmic reticulum by membrane-bound receptors, where the tail-anchored protein is released for insertion. This process is regulated by ATP binding and hydrolysis. ATP binding drives the homodimer towards the closed dimer state, facilitating recognition of newly synthesized TA membrane proteins. ATP hydrolysis is required for insertion. Subsequently, the homodimer reverts towards the open dimer state, lowering its affinity for the membrane-bound receptor, and returning it to the cytosol to initiate a new round of targeting. The chain is ATPase ASNA1 homolog from Trypanosoma cruzi (strain CL Brener).